We begin with the raw amino-acid sequence, 381 residues long: Magnesium transporter MRS2-I (381 aa).

2 helical membrane passes run L316 to G336 and W353 to A373. The Required for magnesium transport activity motif lies at G336 to N338.

It belongs to the CorA metal ion transporter (MIT) (TC 1.A.35.5) family.

The protein resides in the membrane. In terms of biological role, magnesium transporter that may mediate the influx of magnesium. The chain is Magnesium transporter MRS2-I (MRS2-I) from Oryza sativa subsp. indica (Rice).